The sequence spans 101 residues: Small ribosomal subunit protein uS14 (101 aa).

This sequence belongs to the universal ribosomal protein uS14 family. As to quaternary structure, part of the 30S ribosomal subunit. Contacts proteins S3 and S10.

In terms of biological role, binds 16S rRNA, required for the assembly of 30S particles and may also be responsible for determining the conformation of the 16S rRNA at the A site. The chain is Small ribosomal subunit protein uS14 from Rhizobium etli (strain CIAT 652).